We begin with the raw amino-acid sequence, 995 residues long: Epididymis-specific alpha-mannosidase (995 aa).

Residues 1–21 (MGPHSWLPLFMQLALLGPQWA) form the signal peptide. Residues His-36, Asp-38, and Asp-151 each contribute to the Zn(2+) site. Asp-151 serves as the catalytic Nucleophile. The N-linked (GlcNAc...) asparagine glycan is linked to Asn-285. Position 411 (His-411) interacts with Zn(2+). N-linked (GlcNAc...) asparagine glycans are attached at residues Asn-593, Asn-625, Asn-657, Asn-733, Asn-793, Asn-875, and Asn-977. The tract at residues 956–977 (TEDGHHHRGSSRRPLPPLRGPN) is disordered.

This sequence belongs to the glycosyl hydrolase 38 family. It depends on Zn(2+) as a cofactor. Processed into a 27 kDa fragment localized on the equatorial segment and the apical rim of the head of mature sperm. Specific to the caput and corpus of the epididymis.

The protein resides in the secreted. The catalysed reaction is Hydrolysis of terminal, non-reducing alpha-D-mannose residues in alpha-D-mannosides.. Can digest both p-nitro-phenyl-alpha-D-mannoside and high mannose oligosaccharide (Man(8)-GlcNAc(2)). May be involved in sperm maturation. Has a possible role in specific sperm-egg interaction since sperm surface mannosidase acts like a receptor for mannose-containing oligosaccharides located on the zona pellucida. The polypeptide is Epididymis-specific alpha-mannosidase (MAN2B2) (Sus scrofa (Pig)).